Here is a 491-residue protein sequence, read N- to C-terminus: Probable polygalacturonase (491 aa).

A helical transmembrane segment spans residues 15 to 35 (PIVSFYCFQVVSVLVAVVLLL). 3 N-linked (GlcNAc...) asparagine glycosylation sites follow: Asn165, Asn175, and Asn214. PbH1 repeat units lie at residues 230-256 (SRNI…NPDS), 257-278 (CTNT…AVKS), 319-340 (IQDV…RIKT), and 348-369 (VKDI…WMTG). The active-site Proton donor is the Asp271. Asn399 and Asn421 each carry an N-linked (GlcNAc...) asparagine glycan.

This sequence belongs to the glycosyl hydrolase 28 family.

Its subcellular location is the membrane. The enzyme catalyses (1,4-alpha-D-galacturonosyl)n+m + H2O = (1,4-alpha-D-galacturonosyl)n + (1,4-alpha-D-galacturonosyl)m.. The chain is Probable polygalacturonase from Vitis vinifera (Grape).